We begin with the raw amino-acid sequence, 207 residues long: SPRY domain-containing protein 4 (207 aa).

Residues C12–G206 enclose the B30.2/SPRY domain. N6-acetyllysine is present on residues K53 and K130. K139 bears the N6-succinyllysine mark.

This chain is SPRY domain-containing protein 4 (SPRYD4), found in Homo sapiens (Human).